Reading from the N-terminus, the 128-residue chain is Azurin (128 aa).

One can recognise a Plastocyanin-like domain in the interval A1–K128. A disulfide bond links C3 and C26. Residues H46, C112, H117, and M121 each coordinate Cu cation.

It is found in the periplasm. Its function is as follows. Transfers electrons from cytochrome c551 to cytochrome oxidase. The protein is Azurin of Pseudomonas fluorescens biotype A.